Reading from the N-terminus, the 290-residue chain is MFKGSMPALVTPFRNGELDLEALKRLVEWQIGEGSTGLVPVGTTGESPTLSHEEHETVVAEVVKAAAGRVPVIAGAGSNNTTEAIRFVQFAQRIGADAALVVTPYYNRPTQRGLIAHFTALHDCAEIPIVIYNIPGRSVVDMTPATMGALAKLPRIVGVKDATGDLARVSQQRASCGADFIQLSGEDATALGFNAHGGVGCISVTANVAPRLCAEFQQATLAGDYAKALDYQDRLMPLHEAIFIEPGLVGAKYALSKLGLCSEEVRSPLTGLEDSTKAAIDAAMKHAGLL.

A pyruvate-binding site is contributed by Thr-44. Catalysis depends on Tyr-132, which acts as the Proton donor/acceptor. The active-site Schiff-base intermediate with substrate is Lys-160. Ile-202 contacts pyruvate.

This sequence belongs to the DapA family. As to quaternary structure, homotetramer; dimer of dimers.

It localises to the cytoplasm. It catalyses the reaction L-aspartate 4-semialdehyde + pyruvate = (2S,4S)-4-hydroxy-2,3,4,5-tetrahydrodipicolinate + H2O + H(+). The protein operates within amino-acid biosynthesis; L-lysine biosynthesis via DAP pathway; (S)-tetrahydrodipicolinate from L-aspartate: step 3/4. Catalyzes the condensation of (S)-aspartate-beta-semialdehyde [(S)-ASA] and pyruvate to 4-hydroxy-tetrahydrodipicolinate (HTPA). The polypeptide is 4-hydroxy-tetrahydrodipicolinate synthase (Ruegeria pomeroyi (strain ATCC 700808 / DSM 15171 / DSS-3) (Silicibacter pomeroyi)).